The primary structure comprises 292 residues: Polyamine aminopropyltransferase 1 (292 aa).

A PABS domain is found at 1 to 244 (MELGMFRLNI…YVNSFVFASD (244 aa)). S-methyl-5'-thioadenosine is bound at residue glutamine 35. 2 residues coordinate spermidine: histidine 66 and glutamate 90. S-methyl-5'-thioadenosine contacts are provided by residues aspartate 110 and 142-143 (DG). Catalysis depends on aspartate 163, which acts as the Proton acceptor.

Belongs to the spermidine/spermine synthase family. As to quaternary structure, homodimer or homotetramer.

The protein localises to the cytoplasm. The catalysed reaction is norspermine + S-adenosyl 3-(methylsulfanyl)propylamine = caldopentamine + S-methyl-5'-thioadenosine + 2 H(+). It catalyses the reaction norspermidine + S-adenosyl 3-(methylsulfanyl)propylamine = norspermine + S-methyl-5'-thioadenosine + H(+). The enzyme catalyses S-adenosyl 3-(methylsulfanyl)propylamine + spermidine = thermospermine + S-methyl-5'-thioadenosine + H(+). Functionally, involved in the biosynthesis of polyamines which are thought to support the growth of thermophilic microorganisms under high-temperature conditions. It seems that long-chain and branched-chain of polyamines effectively stabilize DNA and RNA, respectively. Catalyzes the irreversible transfer of a propylamine group from the amino donor S-adenosylmethioninamine (decarboxy-AdoMet) to norspermidine, spermidine and norspermine to yield norspermine, thermospermine and caldopentamine, respectively. It can also synthesize sym-norspermidine (bis(3-aminopropyl)amine) from 1,3-diaminopropane with a very low activity. The biosynthesis of caldohexamine and caldoheptamine from caldopentamine has been also observed. The sequence is that of Polyamine aminopropyltransferase 1 from Hyperthermus butylicus (strain DSM 5456 / JCM 9403 / PLM1-5).